We begin with the raw amino-acid sequence, 630 residues long: Molybdenum cofactor biosynthesis protein 1 (630 aa).

Positions 61 to 298 constitute a Radical SAM core domain; that stretch reads RFNRHHTYLR…SKTYHVPGFK (238 aa). Residue Arg-70 participates in GTP binding. Residues Cys-77 and Cys-81 each contribute to the [4Fe-4S] cluster site. Tyr-83 contributes to the S-adenosyl-L-methionine binding site. Cys-84 is a [4Fe-4S] cluster binding site. Arg-120 is a binding site for GTP. Gly-124 contributes to the S-adenosyl-L-methionine binding site. Thr-151 contributes to the GTP binding site. Ser-175 contributes to the S-adenosyl-L-methionine binding site. Position 212 (Lys-212) interacts with GTP. Residue Met-246 participates in S-adenosyl-L-methionine binding. Residues Cys-312 and Cys-315 each contribute to the [4Fe-4S] cluster site. 317–319 lines the GTP pocket; it reads RLR. Cys-329 contributes to the [4Fe-4S] cluster binding site. The interval 402 to 629 is molybdenum cofactor biosynthesis protein C; it reads KEVKNYLLKL…GGKSSSPQIT (228 aa). Residue Asp-599 is the For molybdenum cofactor biosynthesis protein C activity of the active site.

The protein in the C-terminal section; belongs to the MoaC family. This sequence in the N-terminal section; belongs to the radical SAM superfamily. MoaA family. As to quaternary structure, isoform mocs1a and isoform mocs1b probably form a heterooligomer. The cofactor is [4Fe-4S] cluster.

The enzyme catalyses GTP + AH2 + S-adenosyl-L-methionine = (8S)-3',8-cyclo-7,8-dihydroguanosine 5'-triphosphate + 5'-deoxyadenosine + L-methionine + A + H(+). It catalyses the reaction (8S)-3',8-cyclo-7,8-dihydroguanosine 5'-triphosphate = cyclic pyranopterin phosphate + diphosphate. It participates in cofactor biosynthesis; molybdopterin biosynthesis. Isoform mocs1a and isoform mocs1b probably form a complex that catalyzes the conversion of 5'-GTP to cyclic pyranopterin monophosphate (cPMP). mocs1a catalyzes the cyclization of GTP to (8S)-3',8-cyclo-7,8-dihydroguanosine 5'-triphosphate and mocs1b catalyzes the subsequent conversion of (8S)-3',8-cyclo-7,8-dihydroguanosine 5'-triphosphate to cPMP. This chain is Molybdenum cofactor biosynthesis protein 1 (mocs1), found in Dictyostelium discoideum (Social amoeba).